A 324-amino-acid chain; its full sequence is NAD(P)H-dependent D-xylose reductase I,II (324 aa).

Tyr54 serves as the catalytic Proton donor. His116 is a binding site for substrate. NAD(+)-binding positions include 171-172 (SN), 220-229 (SSFGPQSFLE), and 276-286 (KSNNPERLAQN).

This sequence belongs to the aldo/keto reductase family.

The enzyme catalyses xylitol + NAD(+) = D-xylose + NADH + H(+). It catalyses the reaction xylitol + NADP(+) = D-xylose + NADPH + H(+). The protein operates within carbohydrate metabolism; D-xylose degradation. Its function is as follows. Reduces D-xylose into xylitol. Has a preference for NADPH, but can also utilize NADH as cosubstrate. This is NAD(P)H-dependent D-xylose reductase I,II (xyrA) from Candida tropicalis (Yeast).